We begin with the raw amino-acid sequence, 150 residues long: MKAVIQRVSEATVRVDGKKVGSIERGVLVLLGVEKGDETRNADWLAEKIVNLRIFEDDGGKMNLSLMDIKGELLSVSQFTLAGNCSKGRRPSFDTAAPPEDANHLYQYFNGKIWEMGIPVQSGIFQADMKVSLINDGPVTFILETPKREP.

The short motif at 137 to 138 (GP) is the Gly-cisPro motif, important for rejection of L-amino acids element.

Belongs to the DTD family. Homodimer.

The protein localises to the cytoplasm. It catalyses the reaction glycyl-tRNA(Ala) + H2O = tRNA(Ala) + glycine + H(+). It carries out the reaction a D-aminoacyl-tRNA + H2O = a tRNA + a D-alpha-amino acid + H(+). Its function is as follows. An aminoacyl-tRNA editing enzyme that deacylates mischarged D-aminoacyl-tRNAs. Also deacylates mischarged glycyl-tRNA(Ala), protecting cells against glycine mischarging by AlaRS. Acts via tRNA-based rather than protein-based catalysis; rejects L-amino acids rather than detecting D-amino acids in the active site. By recycling D-aminoacyl-tRNA to D-amino acids and free tRNA molecules, this enzyme counteracts the toxicity associated with the formation of D-aminoacyl-tRNA entities in vivo and helps enforce protein L-homochirality. In Geotalea daltonii (strain DSM 22248 / JCM 15807 / FRC-32) (Geobacter daltonii), this protein is D-aminoacyl-tRNA deacylase.